Reading from the N-terminus, the 119-residue chain is Protein FAM24A-like (119 aa).

Positions 1 to 40 (MYKPFDLRTIITIIIGCGILTAMFLLIGLVLCLYSKISKA) are cleaved as a signal peptide.

Belongs to the FAM24 family.

The protein resides in the secreted. The polypeptide is Protein FAM24A-like (Mus musculus (Mouse)).